Consider the following 543-residue polypeptide: Glutamyl-tRNA(Gln) amidotransferase subunit A, chloroplastic/mitochondrial (543 aa).

Residues K121 and S196 each act as charge relay system in the active site. Residue S220 is the Acyl-ester intermediate of the active site.

It belongs to the amidase family. GatA subfamily. In terms of assembly, subunit of the heterotrimeric GatCAB amidotransferase (AdT) complex, composed of A, B and C subunits.

The protein resides in the mitochondrion. Its subcellular location is the plastid. It is found in the chloroplast stroma. The enzyme catalyses L-glutamyl-tRNA(Gln) + L-glutamine + ATP + H2O = L-glutaminyl-tRNA(Gln) + L-glutamate + ADP + phosphate + H(+). Allows the formation of correctly charged Gln-tRNA(Gln) through the transamidation of misacylated Glu-tRNA(Gln) in chloroplasts and mitochondria. The reaction takes place in the presence of glutamine and ATP through an activated gamma-phospho-Glu-tRNA(Gln). This Zea mays (Maize) protein is Glutamyl-tRNA(Gln) amidotransferase subunit A, chloroplastic/mitochondrial.